We begin with the raw amino-acid sequence, 403 residues long: Argininosuccinate synthase (403 aa).

Residues 13–21 (AYSGGLDTS) and A40 contribute to the ATP site. 2 residues coordinate L-citrulline: Y92 and S97. G122 contacts ATP. L-aspartate contacts are provided by T124, N128, and D129. An L-citrulline-binding site is contributed by N128. Residues R132, S181, S190, E266, and Y278 each coordinate L-citrulline.

It belongs to the argininosuccinate synthase family. Type 1 subfamily. As to quaternary structure, homotetramer.

It is found in the cytoplasm. It carries out the reaction L-citrulline + L-aspartate + ATP = 2-(N(omega)-L-arginino)succinate + AMP + diphosphate + H(+). The protein operates within amino-acid biosynthesis; L-arginine biosynthesis; L-arginine from L-ornithine and carbamoyl phosphate: step 2/3. The sequence is that of Argininosuccinate synthase from Aliivibrio fischeri (strain MJ11) (Vibrio fischeri).